A 781-amino-acid polypeptide reads, in one-letter code: Beta-mannosyltransferase 4 (781 aa).

Topologically, residues 1–17 are cytoplasmic; that stretch reads MTKSYMPLFRSPRQFKK. A helical transmembrane segment spans residues 18–38; that stretch reads IYFILIPLILAVIILHVFFDG. Residues 39–781 are Extracellular-facing; that stretch reads FNKISEYSPT…EKEDDDDIEV (743 aa). Residues 640–733 are a coiled coil; sequence KLGDSEAAIK…AKDEDKNEDE (94 aa). 2 stretches are compositionally biased toward basic and acidic residues: residues 663–728 and 736–750; these read KAEK…KDED and KEKNDESGLTEKSEV. Positions 663 to 781 are disordered; the sequence is KAEKEKAEKE…EKEDDDDIEV (119 aa). A compositionally biased stretch (acidic residues) spans 751-781; sequence EENGENTNEGGEDDGDGDGEEEKEDDDDIEV.

Belongs to the BMT family.

It localises to the membrane. Functionally, beta-mannosyltransferase involved in cell wall biosynthesis. Required for the elongation of beta-mannose chains on the acid-labile fraction of cell wall phosphopeptidomannan. The protein is Beta-mannosyltransferase 4 (BMT4) of Candida albicans (strain SC5314 / ATCC MYA-2876) (Yeast).